Here is a 340-residue protein sequence, read N- to C-terminus: Mitochondrial calcium uniporter regulator 1 (340 aa).

Residues 1 to 44 form a disordered region; the sequence is MDSGSVAAERPRRTPSRQRLPSSGCGVPARPGVSTLPGGRSWLR. At 1–54 the chain is on the mitochondrial intermembrane side; it reads MDSGSVAAERPRRTPSRQRLPSSGCGVPARPGVSTLPGGRSWLRPRGRAARASP. Residues 55 to 74 form a helical membrane-spanning segment; that stretch reads LLFLLLVPSPRLAATATATA. Over 75 to 316 the chain is Mitochondrial matrix; it reads PRRTLAERSR…KTMLEAHKLD (242 aa). Residues 197–291 are a coiled coil; it reads ALQQVLSKIA…VSLHAQQDRA (95 aa). Lys204 is modified (N6-acetyllysine). A helical transmembrane segment spans residues 317-339; it reads TIKYLAGSVFTCLTVALGFYRLW. Residue Ile340 is a topological domain, mitochondrial intermembrane.

Belongs to the CCDC90 family. Interacts (via coiled coil regions) with MCU; the interaction is direct. Interacts with SMDT1/EMRE; the interaction is direct. Interacts with PPIF.

Its subcellular location is the mitochondrion inner membrane. Its function is as follows. Key regulator of mitochondrial calcium uniporter (MCU) required for calcium entry into mitochondrion. Plays a direct role in uniporter-mediated calcium uptake via a direct interaction with MCU. Probably involved in the assembly of the membrane components of the uniporter complex (uniplex). The sequence is that of Mitochondrial calcium uniporter regulator 1 from Mus musculus (Mouse).